Reading from the N-terminus, the 303-residue chain is Oxygen-dependent coproporphyrinogen-III oxidase (303 aa).

S93 is a substrate binding site. Residues H97 and H107 each coordinate a divalent metal cation. H107 serves as the catalytic Proton donor. 109–111 (NVR) contacts substrate. A divalent metal cation contacts are provided by H149 and H179. An important for dimerization region spans residues 244-279 (YVEFNLVFDRGTLFGLQSGGRTESILLSMPPLAQWR). 262-264 (GGR) provides a ligand contact to substrate.

Belongs to the aerobic coproporphyrinogen-III oxidase family. As to quaternary structure, homodimer. Requires a divalent metal cation as cofactor.

The protein resides in the cytoplasm. The catalysed reaction is coproporphyrinogen III + O2 + 2 H(+) = protoporphyrinogen IX + 2 CO2 + 2 H2O. It functions in the pathway porphyrin-containing compound metabolism; protoporphyrin-IX biosynthesis; protoporphyrinogen-IX from coproporphyrinogen-III (O2 route): step 1/1. In terms of biological role, involved in the heme biosynthesis. Catalyzes the aerobic oxidative decarboxylation of propionate groups of rings A and B of coproporphyrinogen-III to yield the vinyl groups in protoporphyrinogen-IX. The protein is Oxygen-dependent coproporphyrinogen-III oxidase of Bordetella parapertussis (strain 12822 / ATCC BAA-587 / NCTC 13253).